A 524-amino-acid chain; its full sequence is Cytochrome P450 monooxygenase oblB (524 aa).

The next 3 helical transmembrane spans lie at Ile18–Ile38, Phe225–Ile245, and Val322–Ile342. A heme-binding site is contributed by Cys466.

This sequence belongs to the cytochrome P450 family. Heme serves as cofactor.

It is found in the membrane. It catalyses the reaction ophiobolin F + 4 reduced [NADPH--hemoprotein reductase] + 4 O2 = ophiobolin C + 4 oxidized [NADPH--hemoprotein reductase] + 6 H2O + 4 H(+). It participates in secondary metabolite biosynthesis; terpenoid biosynthesis. Cytochrome P450 monooxygenase; part of the gene cluster that mediates the biosynthesis of the sesterterpenes ophiobolins, fungal phytotoxins with potential anti-cancer activities. The first step of the pathway is performed by the sesterterpene synthase oblA that possesses both prenyl transferase and terpene cyclase activity, converting isopentenyl diphosphate and dimethylallyl diphosphate into geranylfarnesyl diphosphate (GFPP) and further converting GFPP into ophiobolin F, respectively. Other sesterterpenoids (C(25) terpenoids) are found as minor products of oblA. The cytochrome P450 monooxygenase oblB then catalyzes a four-step oxidative transformation of ophiobolin F to yield ophiobolin C. The FAD-dependent oxidoreductase oblC might be involved in a later oxidation step that produces ophiobolin A. The polypeptide is Cytochrome P450 monooxygenase oblB (Cochliobolus heterostrophus (strain C5 / ATCC 48332 / race O) (Southern corn leaf blight fungus)).